The primary structure comprises 754 residues: RNA exonuclease 5 (754 aa).

The interval 1-36 (MELEEEENPRKRKETPNSALTTELDRPSWDVQDPEP) is disordered. Residues 222-370 (LFGLDCEVCL…EDARTALELV (149 aa)) form the Exonuclease domain. 2 RRM domains span residues 488–562 (STIY…RLLT) and 583–662 (GTIY…RHLQ).

This Rattus norvegicus (Rat) protein is RNA exonuclease 5 (Rexo5).